A 108-amino-acid chain; its full sequence is Protein YcgL (108 aa).

Residues 12–96 (MFCVIYRSSK…PPEDLLKQHL (85 aa)) enclose the YcgL domain.

This Shigella sonnei (strain Ss046) protein is Protein YcgL.